We begin with the raw amino-acid sequence, 243 residues long: Small ribosomal subunit protein uS3 (243 aa).

Residues 39–107 form the KH type-2 domain; that stretch reads MRKFVMSELK…ETHLNIVEVR (69 aa). Residues 214 to 243 are disordered; sequence ASERRAMEGDAQGPASRDRDRDRDRRRDNA. Over residues 229–243 the composition is skewed to basic and acidic residues; it reads SRDRDRDRDRRRDNA.

It belongs to the universal ribosomal protein uS3 family. Part of the 30S ribosomal subunit. Forms a tight complex with proteins S10 and S14.

Functionally, binds the lower part of the 30S subunit head. Binds mRNA in the 70S ribosome, positioning it for translation. The chain is Small ribosomal subunit protein uS3 from Rhizobium johnstonii (strain DSM 114642 / LMG 32736 / 3841) (Rhizobium leguminosarum bv. viciae).